The sequence spans 264 residues: Indole-3-glycerol phosphate synthase (264 aa).

This sequence belongs to the TrpC family.

It catalyses the reaction 1-(2-carboxyphenylamino)-1-deoxy-D-ribulose 5-phosphate + H(+) = (1S,2R)-1-C-(indol-3-yl)glycerol 3-phosphate + CO2 + H2O. It participates in amino-acid biosynthesis; L-tryptophan biosynthesis; L-tryptophan from chorismate: step 4/5. The polypeptide is Indole-3-glycerol phosphate synthase (Albidiferax ferrireducens (strain ATCC BAA-621 / DSM 15236 / T118) (Rhodoferax ferrireducens)).